The chain runs to 129 residues: Lysozyme C (129 aa).

Positions 1–129 constitute a C-type lysozyme domain; it reads KVYGRCELAA…VSVWTRGCRL (129 aa). 4 cysteine pairs are disulfide-bonded: Cys-6–Cys-127, Cys-30–Cys-115, Cys-64–Cys-80, and Cys-76–Cys-94. Catalysis depends on residues Glu-35 and Asp-52.

This sequence belongs to the glycosyl hydrolase 22 family. In terms of assembly, monomer.

The protein resides in the secreted. The enzyme catalyses Hydrolysis of (1-&gt;4)-beta-linkages between N-acetylmuramic acid and N-acetyl-D-glucosamine residues in a peptidoglycan and between N-acetyl-D-glucosamine residues in chitodextrins.. In terms of biological role, lysozymes have primarily a bacteriolytic function; those in tissues and body fluids are associated with the monocyte-macrophage system and enhance the activity of immunoagents. In Lophura leucomelanos (Kalij pheasant), this protein is Lysozyme C (LYZ).